Consider the following 1033-residue polypeptide: Isoleucine--tRNA ligase 2 (1033 aa).

Residues 47–57 (PTANGLPHVGH) carry the 'HIGH' region motif. The 'KMSKS' region signature appears at 590–594 (KMSKS). Lys-593 lines the ATP pocket.

This sequence belongs to the class-I aminoacyl-tRNA synthetase family. IleS type 2 subfamily. Monomer. Requires Zn(2+) as cofactor.

It localises to the cytoplasm. It catalyses the reaction tRNA(Ile) + L-isoleucine + ATP = L-isoleucyl-tRNA(Ile) + AMP + diphosphate. Catalyzes the attachment of isoleucine to tRNA(Ile). As IleRS can inadvertently accommodate and process structurally similar amino acids such as valine, to avoid such errors it has two additional distinct tRNA(Ile)-dependent editing activities. One activity is designated as 'pretransfer' editing and involves the hydrolysis of activated Val-AMP. The other activity is designated 'posttransfer' editing and involves deacylation of mischarged Val-tRNA(Ile). This Bacillus anthracis protein is Isoleucine--tRNA ligase 2.